Here is an 814-residue protein sequence, read N- to C-terminus: ATP-dependent RNA helicase dbp-7 (814 aa).

The interval 26 to 102 (GGRWRDRVKA…PPPPPTHAMK (77 aa)) is disordered. Composition is skewed to basic and acidic residues over residues 28 to 42 (RWRD…EKGG) and 69 to 78 (QRTEDGDSGR). The Q motif motif lies at 145–174 (ENFLSLGLSRRVSQHLATKLEMKAPTAIQK). The Helicase ATP-binding domain occupies 178–384 (PQLVKEDSDA…EISLEDAVHI (207 aa)). 191 to 198 (AETGSGKT) serves as a coordination point for ATP. Residues 313–316 (DEGD) carry the DEAD box motif. Residues 422 to 622 (RLVTLIALLK…GFATNINVPG (201 aa)) form the Helicase C-terminal domain. 3 disordered regions span residues 464–483 (TPRA…KPNI), 662–695 (ESKS…PLLV), and 741–795 (GIGG…AGRR). A compositionally biased stretch (basic and acidic residues) spans 467–477 (AEPEPKPEGEA). The segment covering 779–790 (DDDERDFGAADE) has biased composition (acidic residues).

It belongs to the DEAD box helicase family. DDX31/DBP7 subfamily.

The protein localises to the nucleus. Its subcellular location is the nucleolus. It carries out the reaction ATP + H2O = ADP + phosphate + H(+). ATP-binding RNA helicase involved in the biogenesis of 60S ribosomal subunits and is required for the normal formation of 25S and 5.8S rRNAs. The protein is ATP-dependent RNA helicase dbp-7 (dbp-7) of Neurospora crassa (strain ATCC 24698 / 74-OR23-1A / CBS 708.71 / DSM 1257 / FGSC 987).